The following is a 426-amino-acid chain: Putative nickel insertion protein (426 aa).

The protein belongs to the LarC family.

The sequence is that of Putative nickel insertion protein from Nostoc sp. (strain PCC 7120 / SAG 25.82 / UTEX 2576).